We begin with the raw amino-acid sequence, 282 residues long: WRKY transcription factor 71 (282 aa).

The disordered stretch occupies residues 63 to 121; it reads LTSNSPVVSSSSNEGEPKENTNDKSDQMEDNEGDLHGVGESSKQLTKQGKKKGEKKERE. Positions 65-75 are enriched in low complexity; that stretch reads SNSPVVSSSSN. The span at 77–99 shows a compositional bias: basic and acidic residues; sequence GEPKENTNDKSDQMEDNEGDLHG. Residues 130–195 constitute a DNA-binding region (WRKY); sequence SEIDHLEDGY…YEGKHNHPIP (66 aa).

The protein belongs to the WRKY group II-c family.

The protein localises to the nucleus. In terms of biological role, transcription factor. Interacts specifically with the W box (5'-(T)TGAC[CT]-3'), a frequently occurring elicitor-responsive cis-acting element. This is WRKY transcription factor 71 (WRKY71) from Arabidopsis thaliana (Mouse-ear cress).